Here is a 434-residue protein sequence, read N- to C-terminus: Ribosomal protein uS12 methylthiotransferase RimO (434 aa).

The region spanning 6–122 (NRVFLLSLGC…ILTAIGARYR (117 aa)) is the MTTase N-terminal domain. 6 residues coordinate [4Fe-4S] cluster: Cys15, Cys51, Cys85, Cys146, Cys150, and Cys153. Residues 132 to 361 (TAPGHTSFLK…MELQEGISEE (230 aa)) form the Radical SAM core domain. Residues 364-431 (KRLEGREIAV…PYELFGTVLK (68 aa)) form the TRAM domain.

Belongs to the methylthiotransferase family. RimO subfamily. [4Fe-4S] cluster is required as a cofactor.

It is found in the cytoplasm. The enzyme catalyses L-aspartate(89)-[ribosomal protein uS12]-hydrogen + (sulfur carrier)-SH + AH2 + 2 S-adenosyl-L-methionine = 3-methylsulfanyl-L-aspartate(89)-[ribosomal protein uS12]-hydrogen + (sulfur carrier)-H + 5'-deoxyadenosine + L-methionine + A + S-adenosyl-L-homocysteine + 2 H(+). Catalyzes the methylthiolation of an aspartic acid residue of ribosomal protein uS12. In Chlorobium phaeovibrioides (strain DSM 265 / 1930) (Prosthecochloris vibrioformis (strain DSM 265)), this protein is Ribosomal protein uS12 methylthiotransferase RimO.